Reading from the N-terminus, the 38-residue chain is Photosystem I reaction center subunit IX (38 aa).

The chain crosses the membrane as a helical span at residues 4–24 (FLTAAPVVAAIWFTATAGILI).

This sequence belongs to the PsaJ family.

Its subcellular location is the cellular thylakoid membrane. In terms of biological role, may help in the organization of the PsaE and PsaF subunits. The chain is Photosystem I reaction center subunit IX from Synechococcus sp. (strain CC9605).